The sequence spans 281 residues: MSIKVTGLTYVYMKGTPYEKKALDNINLSIETGEFVGIIGHTGSGKSTLVQHFNGLLKPTSGSVYINGEELTGQRAKELKKQVGIVFQYPEHQLFEETVYKDIAFGLVRRGEEKDEIYRKVRKTIRLVGLSEDILDKSPFELSGGQKRRVAMAGILVLEPSILVLDEPAAGLDPKGREEIFELVSNLHKNNKMTVILVSHSMEDVAKYVQRVIVMNQGRIEMCGPVRSVFKNTETLEEIGLAAPQITYLMKKLKEKIPQINDDILTIAEAKEELAKYIRKA.

An ABC transporter domain is found at 3 to 242 (IKVTGLTYVY…TETLEEIGLA (240 aa)). Residue 40 to 47 (GHTGSGKS) participates in ATP binding.

Belongs to the ABC transporter superfamily. Energy-coupling factor EcfA family. As to quaternary structure, forms a stable energy-coupling factor (ECF) transporter complex composed of 2 membrane-embedded substrate-binding proteins (S component), 2 ATP-binding proteins (A component) and 2 transmembrane proteins (T component).

It is found in the cell membrane. Functionally, ATP-binding (A) component of a common energy-coupling factor (ECF) ABC-transporter complex. Unlike classic ABC transporters this ECF transporter provides the energy necessary to transport a number of different substrates. The chain is Energy-coupling factor transporter ATP-binding protein EcfA2 from Acetivibrio thermocellus (strain ATCC 27405 / DSM 1237 / JCM 9322 / NBRC 103400 / NCIMB 10682 / NRRL B-4536 / VPI 7372) (Clostridium thermocellum).